The chain runs to 257 residues: Acetylglutamate kinase (257 aa).

Residues Gly43–Gly44, Arg65, and Asn157 contribute to the substrate site. Residues Asp180–Leu185 and Ile208–Thr210 each bind ATP.

The protein belongs to the acetylglutamate kinase family. ArgB subfamily. Homodimer.

It localises to the cytoplasm. It carries out the reaction N-acetyl-L-glutamate + ATP = N-acetyl-L-glutamyl 5-phosphate + ADP. It functions in the pathway amino-acid biosynthesis; L-arginine biosynthesis; N(2)-acetyl-L-ornithine from L-glutamate: step 2/4. Catalyzes the ATP-dependent phosphorylation of N-acetyl-L-glutamate. The sequence is that of Acetylglutamate kinase from Serratia proteamaculans (strain 568).